The chain runs to 200 residues: dITP/XTP pyrophosphatase (200 aa).

Position 8–13 (8–13 (TRNAGK)) interacts with substrate. Catalysis depends on D72, which acts as the Proton acceptor. Mg(2+) is bound at residue D72. Substrate is bound by residues S73, 155–158 (FGYD), K178, and 183–184 (HR).

It belongs to the HAM1 NTPase family. As to quaternary structure, homodimer. Mg(2+) is required as a cofactor.

The enzyme catalyses XTP + H2O = XMP + diphosphate + H(+). The catalysed reaction is dITP + H2O = dIMP + diphosphate + H(+). It carries out the reaction ITP + H2O = IMP + diphosphate + H(+). In terms of biological role, pyrophosphatase that catalyzes the hydrolysis of nucleoside triphosphates to their monophosphate derivatives, with a high preference for the non-canonical purine nucleotides XTP (xanthosine triphosphate), dITP (deoxyinosine triphosphate) and ITP. Seems to function as a house-cleaning enzyme that removes non-canonical purine nucleotides from the nucleotide pool, thus preventing their incorporation into DNA/RNA and avoiding chromosomal lesions. The chain is dITP/XTP pyrophosphatase from Streptomyces avermitilis (strain ATCC 31267 / DSM 46492 / JCM 5070 / NBRC 14893 / NCIMB 12804 / NRRL 8165 / MA-4680).